Consider the following 125-residue polypeptide: TSKPVQNRELQGYESTDFXGYFKGGLKYKAGGVASGFNHVLTNXLSAQRLLHVKGRRVVRATEVPLSWDSFNKGDCFIIDLGSEIYQWFGSSCNKYERLKASQVATGIRDNERNGRSQLIVVEEG.

Y13 is modified (phosphotyrosine). Residues 23 to 30 (KGGLKYKA) and 49 to 57 (RLLHVKGRR) each bind a 1,2-diacyl-sn-glycero-3-phospho-(1D-myo-inositol-4,5-bisphosphate). One copy of the Gelsolin-like 1 repeat lies at 59-99 (VRATEVPLSWDSFNKGDCFIIDLGSEIYQWFGSSCNKYERL).

It belongs to the villin/gelsolin family.

The protein localises to the cytoplasm. The protein resides in the cytoskeleton. It is found in the cell projection. It localises to the podosome. In terms of biological role, ca(2+)-dependent actin filament-severing protein that has a regulatory function in exocytosis by affecting the organization of the microfilament network underneath the plasma membrane. In vitro, also has barbed end capping and nucleating activities in the presence of Ca(2+). Severing activity is inhibited by phosphatidylinositol 4,5-bis-phosphate (PIP2). Required for megakaryocyte differentiation, maturation, polyploidization and apoptosis with the release of platelet-like particles. Plays a role in osteoclastogenesis (OCG) and actin cytoskeletal organization in osteoclasts. Regulates chondrocyte proliferation and differentiation. Inhibits cell proliferation and tumorigenesis. Signaling is mediated by MAPK, p38 and JNK pathways. This is Scinderin (SCIN) from Sus scrofa (Pig).